Here is a 243-residue protein sequence, read N- to C-terminus: Ribonuclease PH (243 aa).

Phosphate contacts are provided by residues Arg84 and 122 to 124; that span reads GTR.

It belongs to the RNase PH family. As to quaternary structure, homohexameric ring arranged as a trimer of dimers.

It catalyses the reaction tRNA(n+1) + phosphate = tRNA(n) + a ribonucleoside 5'-diphosphate. Its function is as follows. Phosphorolytic 3'-5' exoribonuclease that plays an important role in tRNA 3'-end maturation. Removes nucleotide residues following the 3'-CCA terminus of tRNAs; can also add nucleotides to the ends of RNA molecules by using nucleoside diphosphates as substrates, but this may not be physiologically important. Probably plays a role in initiation of 16S rRNA degradation (leading to ribosome degradation) during starvation. This chain is Ribonuclease PH, found in Bdellovibrio bacteriovorus (strain ATCC 15356 / DSM 50701 / NCIMB 9529 / HD100).